Consider the following 436-residue polypeptide: Homeobox protein PKNOX1 (436 aa).

Residues 1 to 20 (MMATQTLSIDSYQDGQQMQV) are compositionally biased toward polar residues. The interval 1–49 (MMATQTLSIDSYQDGQQMQVVTELKTEQDPNCSEPDAEGVSPPPVESQT) is disordered. Phosphoserine occurs at positions 33 and 41. The MEIS N-terminal domain occupies 80–163 (GSEGTTSASF…MNSETLLSGE (84 aa)). Positions 259-321 (SKNKRGVLPK…NARRRILQPM (63 aa)) form a DNA-binding region, homeobox; TALE-type. Residues 401–436 (AGQSEDESVDSTEEDAGALAPAHISGLVLENSDSLQ) form a disordered region. Residues 404 to 416 (SEDESVDSTEEDA) show a composition bias toward acidic residues.

Belongs to the TALE/MEIS homeobox family. Interacts with MN1. In terms of tissue distribution, ubiquitous. Isoform 2 is expressed in all examined tissues except in bone marrow.

The protein resides in the nucleus. Its function is as follows. Activates transcription in the presence of PBX1A and HOXA1. The protein is Homeobox protein PKNOX1 of Homo sapiens (Human).